The following is a 723-amino-acid chain: Pentatricopeptide repeat-containing protein At5g50280, chloroplastic (723 aa).

The N-terminal 44 residues, 1-44, are a transit peptide targeting the chloroplast; that stretch reads MSMASSSLATQSFFSSFPLSHRLHFPVPYLLLRSSFFRKPLSLS. Residues 70 to 97 are disordered; it reads IQQPENSTINSEESECEEEDDEEGDDFT. Acidic residues predominate over residues 81–97; that stretch reads EESECEEEDDEEGDDFT. PPR repeat units lie at residues 272–306, 307–342, 343–377, 378–412, 413–447, 448–483, 484–518, 519–553, 554–588, 589–623, and 624–658; these read DVRLYNAAISGLSASQRYDDAWEVYEAMDKINVYP, DNVTCAILITTLRKAGRSAKEVWEIFEKMSEKGVKW, SQDVFGGLVKSFCDEGLKEEALVIQTEMEKKGIRS, NTIVYNTLMDAYNKSNHIEEVEGLFTEMRDKGLKP, SAATYNILMDAYARRMQPDIVETLLREMEDLGLEP, NVKSYTCLISAYGRTKKMSDMAADAFLRMKKVGLKP, SSHSYTALIHAYSVSGWHEKAYASFEEMCKEGIKP, SVETYTSVLDAFRRSGDTGKLMEIWKLMLREKIKG, TRITYNTLLDGFAKQGLYIEARDVVSEFSKMGLQP, SVMTYNMLMNAYARGGQDAKLPQLLKEMAALNLKP, and DSITYSTMIYAFVRVRDFKRAFFYHKMMVKSGQVP. The disordered stretch occupies residues 700 to 723; the sequence is TKGKKDEFWKYKTNRTTSPGRHRS. A compositionally biased stretch (polar residues) spans 713–723; that stretch reads NRTTSPGRHRS.

Belongs to the PPR family. P subfamily.

The protein resides in the plastid. The protein localises to the chloroplast. This chain is Pentatricopeptide repeat-containing protein At5g50280, chloroplastic (EMB1006), found in Arabidopsis thaliana (Mouse-ear cress).